The chain runs to 252 residues: Short-chain dehydrogenase anuI (252 aa).

6 residues coordinate NADP(+): leucine 18, aspartate 65, asparagine 92, tyrosine 171, lysine 175, and threonine 206. The active-site Proton acceptor is tyrosine 171. The active-site Proton donor is tyrosine 171. Lysine 175 (lowers pKa of active site Tyr) is an active-site residue.

It belongs to the short-chain dehydrogenases/reductases (SDR) family.

In terms of biological role, highly reducing polyketide synthase; part of the gene cluster that mediates the biosynthesis of annullatin D, an alkylated aromatic polyketide with a fused dihydrobenzofuran lactone ring system that exhibits potent agonistic activities toward the cannabinoid receptors. AnuI does not seem to play a role within the pathway. The annullatin backbone 2-hydroxymethyl-3-pentylphenol is assembled from one acetyl-CoA starter unit and 5 malonyl-CoA elongation units by cooperation of the highly reducing polyketide synthase anuA, the short-chain dehydrogenase anuB and the oxidoreductase anuC, before being hydroxylated at the C-5 alkyl chain by the cytochrome P450 monooxygenase anuE to form (8S)-annullatin E. The prenyltransferase anuH subsequently installs one isoprenyl group at the benzene ring to form (8S)-annullatin J. Enzymatic or nonenzymatic dihydro-benzofuran ring formation between the prenyl and the phenolic hydroxyl groups in (8S)-annullatin J results in two diastereomers (2S,9S)-annullatin H and compound 12. The intermediate (2S,9S)-annullatin H is then converted to (2S,9S)-annullatin D by the FAD-linked oxidoreductase anuG-catalyzed five-member lactone ring formation. The isomer 12 acts as a substrate for the short-chain dehydrogenase anuF and is oxidized to (2R)-annullatin F, which is subsequently acetylated by an acetyltransferase leading to (2R)-annullatin G formation. The remaining enzymes identified within the cluster, anuD, anuI and anuJ, seem not to be involved in annullatin biosynthesis. This is Short-chain dehydrogenase anuI from Penicillium roqueforti (strain FM164).